The primary structure comprises 1203 residues: DNA-directed RNA polymerase subunit beta (1203 aa).

The span at 1174 to 1195 shows a compositional bias: basic and acidic residues; the sequence is AAQEAKAAFEAEEAEKATKAEA. Positions 1174 to 1203 are disordered; that stretch reads AAQEAKAAFEAEEAEKATKAEATEEAAEQE.

Belongs to the RNA polymerase beta chain family. The RNAP catalytic core consists of 2 alpha, 1 beta, 1 beta' and 1 omega subunit. When a sigma factor is associated with the core the holoenzyme is formed, which can initiate transcription.

It carries out the reaction RNA(n) + a ribonucleoside 5'-triphosphate = RNA(n+1) + diphosphate. In terms of biological role, DNA-dependent RNA polymerase catalyzes the transcription of DNA into RNA using the four ribonucleoside triphosphates as substrates. The polypeptide is DNA-directed RNA polymerase subunit beta (Streptococcus pneumoniae (strain JJA)).